The chain runs to 348 residues: uncharacterized protein (348 aa).

May be involved in apoptosis regulation. This is an uncharacterized protein from Mus musculus (Mouse).